The chain runs to 474 residues: RNA-binding protein Nova-1 (474 aa).

The span at 1–12 (MAAAPIQQNGTH) shows a compositional bias: polar residues. The tract at residues 1–43 (MAAAPIQQNGTHTGVPIDLDPPDSRKRPLEAPPEAGSTKRTNT) is disordered. Positions 26 to 42 (KRPLEAPPEAGSTKRTN) match the Bipartite nuclear localization signal motif. KH domains lie at 48 to 115 (QYFL…HGFI), 146 to 212 (IKQV…VELI), and 396 to 463 (KDVV…QYLI). A required for RNA binding region spans residues 394-474 (GSKDVVEIAV…QRITYEQGVR (81 aa)).

In terms of assembly, interacts with PTBP2; the interaction is direct.

It localises to the nucleus. Functionally, functions to regulate alternative splicing in neurons by binding pre-mRNA in a sequence-specific manner to activate exon inclusion or exclusion. It binds specifically to the sequences 5'-YCAY-3' and regulates splicing in only a subset of regulated exons. Binding to an exonic 5'-YCAY-3' cluster changes the protein complexes assembled on pre-mRNA, blocking U1 snRNP binding and exon inclusion, whereas binding to an intronic 5'-YCAY-3' cluster enhances spliceosome assembly and exon inclusion. Binding to 5'-YCAY-3' clusters results in a local and asymmetric action to regulate spliceosome assembly and alternative splicing in neurons. Binding to an exonic 5'-YCAY-3' cluster changed the protein complexes assembled on pre-mRNA, blocking U1 snRNP (small nuclear ribonucleoprotein) binding and exon inclusion, whereas binding to an intronic 5'-YCAY-3' cluster enhanced spliceosome assembly and exon inclusion. With NOVA1, they perform unique biological functions in different brain areas and cell types. Autoregulates its own expression by acting as a splicing repressor. Acts to activate the inclusion of exon E3A in the glycine receptor alpha-2 chain and of exon E9 in gamma-aminobutyric-acid receptor gamma-2 subunit via a distal downstream UCAU-rich intronic splicing enhancer. Acts to regulate a novel glycine receptor alpha-2 chain splice variant (alpha-2N) in developing spinal cord. The chain is RNA-binding protein Nova-1 from Rattus norvegicus (Rat).